The primary structure comprises 889 residues: TATA box-binding protein-associated factor RNA polymerase I subunit B (889 aa).

The segment at 1–33 adopts an RRN7-type zinc-finger fold; the sequence is MAPETNEKCKACGGFNFSMIDGFKYCDRCGTLL. Residues Cys9, Cys12, Cys26, and Cys29 each coordinate Zn(2+). A B-reader region spans residues 35–101; the sequence is NFEELEAEEG…DFFSRQALKN (67 aa). Residues 102–113 form a B-linker region; the sequence is DELAFPHESTPD. The N-terminal cyclin fold stretch occupies residues 114-351; sequence YLYRLGLRLA…SAKEQETKEA (238 aa). A disordered region spans residues 229-253; sequence NLDLDSEEDEEEEENPNLNKSMENL. Positions 230–243 are enriched in acidic residues; sequence LDLDSEEDEEEEEN. Positions 352 to 510 are C-terminal cyclin fold; sequence MTKVDYAEPY…LLVFRLTFDI (159 aa).

This sequence belongs to the RRN7/TAF1B family.

It is found in the nucleus. The protein resides in the nucleolus. In terms of biological role, component of RNA polymerase I core factor complex that acts as a GTF2B/TFIIB-like factor and plays a key role in multiple steps during transcription initiation such as pre-initiation complex (PIC) assembly and postpolymerase recruitment events in polymerase I (Pol I) transcription. Binds rDNA promoters and plays a role in Pol I recruitment. The protein is TATA box-binding protein-associated factor RNA polymerase I subunit B of Caenorhabditis briggsae.